A 268-amino-acid chain; its full sequence is Cytochrome c oxidase subunit 3 (268 aa).

The next 7 membrane-spanning stretches (helical) occupy residues 19 to 39 (PWPI…VLTM), 49 to 69 (FDLG…DIVI), 85 to 105 (LIIG…SVFW), 124 to 144 (PVGI…IILL), 165 to 185 (SIIG…FQAF), 202 to 222 (VFFA…LFLF), and 245 to 265 (ILYW…VYFW).

Belongs to the cytochrome c oxidase subunit 3 family. Component of the cytochrome c oxidase (complex IV, CIV), a multisubunit enzyme composed of a catalytic core of 3 subunits and several supernumerary subunits. The complex exists as a monomer or a dimer and forms supercomplexes (SCs) in the inner mitochondrial membrane with ubiquinol-cytochrome c oxidoreductase (cytochrome b-c1 complex, complex III, CIII).

Its subcellular location is the mitochondrion inner membrane. The enzyme catalyses 4 Fe(II)-[cytochrome c] + O2 + 8 H(+)(in) = 4 Fe(III)-[cytochrome c] + 2 H2O + 4 H(+)(out). In terms of biological role, component of the cytochrome c oxidase, the last enzyme in the mitochondrial electron transport chain which drives oxidative phosphorylation. The respiratory chain contains 3 multisubunit complexes succinate dehydrogenase (complex II, CII), ubiquinol-cytochrome c oxidoreductase (cytochrome b-c1 complex, complex III, CIII) and cytochrome c oxidase (complex IV, CIV), that cooperate to transfer electrons derived from NADH and succinate to molecular oxygen, creating an electrochemical gradient over the inner membrane that drives transmembrane transport and the ATP synthase. Cytochrome c oxidase is the component of the respiratory chain that catalyzes the reduction of oxygen to water. Electrons originating from reduced cytochrome c in the intermembrane space (IMS) are transferred via the dinuclear copper A center (CU(A)) of subunit 2 and heme A of subunit 1 to the active site in subunit 1, a binuclear center (BNC) formed by heme A3 and copper B (CU(B)). The BNC reduces molecular oxygen to 2 water molecules using 4 electrons from cytochrome c in the IMS and 4 protons from the mitochondrial matrix. This chain is Cytochrome c oxidase subunit 3 (COIII), found in Schizophyllum commune (Split gill fungus).